Reading from the N-terminus, the 210-residue chain is Probable GTP-binding protein EngB (210 aa).

The region spanning 22–198 is the EngB-type G domain; sequence FLPEYAFIGR…LTYIDEVNQE (177 aa). GTP contacts are provided by residues 30–37, 57–61, 75–78, 142–145, and 177–179; these read GRSNVGKS, GKTQL, DLPG, TKAD, and TSS. Mg(2+) is bound by residues Ser-37 and Thr-59.

Belongs to the TRAFAC class TrmE-Era-EngA-EngB-Septin-like GTPase superfamily. EngB GTPase family. Requires Mg(2+) as cofactor.

Its function is as follows. Necessary for normal cell division and for the maintenance of normal septation. The chain is Probable GTP-binding protein EngB from Flavobacterium johnsoniae (strain ATCC 17061 / DSM 2064 / JCM 8514 / BCRC 14874 / CCUG 350202 / NBRC 14942 / NCIMB 11054 / UW101) (Cytophaga johnsonae).